We begin with the raw amino-acid sequence, 734 residues long: Ribosomal RNA large subunit methyltransferase K/L (734 aa).

Residues 49-167 (QAYRVCMWSR…KTEHTYCLDL (119 aa)) enclose the THUMP domain.

The protein belongs to the methyltransferase superfamily. RlmKL family.

The protein localises to the cytoplasm. The enzyme catalyses guanosine(2445) in 23S rRNA + S-adenosyl-L-methionine = N(2)-methylguanosine(2445) in 23S rRNA + S-adenosyl-L-homocysteine + H(+). The catalysed reaction is guanosine(2069) in 23S rRNA + S-adenosyl-L-methionine = N(2)-methylguanosine(2069) in 23S rRNA + S-adenosyl-L-homocysteine + H(+). In terms of biological role, specifically methylates the guanine in position 2445 (m2G2445) and the guanine in position 2069 (m7G2069) of 23S rRNA. The sequence is that of Ribosomal RNA large subunit methyltransferase K/L from Acinetobacter baylyi (strain ATCC 33305 / BD413 / ADP1).